Reading from the N-terminus, the 395-residue chain is Synaptotagmin-8 (395 aa).

The Extracellular segment spans residues M1 to I44. A helical; Signal-anchor for type III membrane protein membrane pass occupies residues L45–C65. Residues Y66 to S395 lie on the Cytoplasmic side of the membrane. C2 domains follow at residues P113–Y229 and Q241–H370.

The protein belongs to the synaptotagmin family. As to quaternary structure, homodimer or homooligomer. Homodimerization and homooligomerization do not depend on Ca(2+). Interacts with SYNCRIP isoform 2 C-terminus. Binds inositol 1,3,4,5-tetrakisphosphate (IP4). Binds to AP2 in a Ca(2+)-independent manner. Interacts with STX1A, STX1B and STX2; the interaction is Ca(2+)-dependent. Ubiquitous. Strongly expressed in heart, kidney, cerebral cortex, pancreas, and many insulin-secreting cells; lower expression in spleen. Broadly distributed in kidney.

It localises to the cell membrane. The protein localises to the cytoplasmic vesicle. Its subcellular location is the secretory vesicle. The protein resides in the acrosome. Its function is as follows. Involved in the trafficking and exocytosis of secretory vesicles in non-neuronal tissues. Mediates Ca(2+)-regulation of exocytosis acrosomal reaction in sperm. May mediate Ca(2+)-regulation of exocytosis in insulin secreted cells. This is Synaptotagmin-8 (Syt8) from Rattus norvegicus (Rat).